The primary structure comprises 696 residues: Elongation factor G (696 aa).

The tr-type G domain occupies 8 to 286; it reads EDVRNIGIAA…AVVHYLPSPV (279 aa). GTP is bound by residues 17-24, 81-85, and 135-138; these read AHIDAGKT, DTPGH, and NKMD.

It belongs to the TRAFAC class translation factor GTPase superfamily. Classic translation factor GTPase family. EF-G/EF-2 subfamily.

It localises to the cytoplasm. In terms of biological role, catalyzes the GTP-dependent ribosomal translocation step during translation elongation. During this step, the ribosome changes from the pre-translocational (PRE) to the post-translocational (POST) state as the newly formed A-site-bound peptidyl-tRNA and P-site-bound deacylated tRNA move to the P and E sites, respectively. Catalyzes the coordinated movement of the two tRNA molecules, the mRNA and conformational changes in the ribosome. The chain is Elongation factor G from Sulfurovum sp. (strain NBC37-1).